The following is a 161-amino-acid chain: GTP-dependent dephospho-CoA kinase (161 aa).

GTP-binding residues include aspartate 40, valine 41, valine 42, aspartate 59, and glutamate 112.

It belongs to the GTP-dependent DPCK family.

It carries out the reaction 3'-dephospho-CoA + GTP = GDP + CoA + H(+). The protein operates within cofactor biosynthesis; coenzyme A biosynthesis. Its function is as follows. Catalyzes the GTP-dependent phosphorylation of the 3'-hydroxyl group of dephosphocoenzyme A to form coenzyme A (CoA). The polypeptide is GTP-dependent dephospho-CoA kinase (Methanoculleus marisnigri (strain ATCC 35101 / DSM 1498 / JR1)).